The chain runs to 178 residues: dCTP deaminase, dUMP-forming (178 aa).

DCTP-binding positions include 96-101, aspartate 113, 121-123, glutamine 142, tyrosine 156, and glutamine 163; these read RSSLGR and TLE. Glutamate 123 functions as the Proton donor/acceptor in the catalytic mechanism.

The protein belongs to the dCTP deaminase family. As to quaternary structure, homotrimer.

It carries out the reaction dCTP + 2 H2O = dUMP + NH4(+) + diphosphate. The protein operates within pyrimidine metabolism; dUMP biosynthesis; dUMP from dCTP: step 1/1. In terms of biological role, bifunctional enzyme that catalyzes both the deamination of dCTP to dUTP and the hydrolysis of dUTP to dUMP without releasing the toxic dUTP intermediate. The sequence is that of dCTP deaminase, dUMP-forming from Acetivibrio thermocellus (strain ATCC 27405 / DSM 1237 / JCM 9322 / NBRC 103400 / NCIMB 10682 / NRRL B-4536 / VPI 7372) (Clostridium thermocellum).